The sequence spans 410 residues: Interstrand DNA cross-link repair glycosylase (410 aa).

The QXD; important for activity motif lies at 45–47; that stretch reads QID.

Belongs to the DNA glycosylase AlkZ-like family.

In terms of biological role, DNA glycosylase involved in the repair of interstrand DNA cross-links (ICLs), which are highly toxic DNA lesions that covalently tether the opposing strands of DNA, thereby inhibiting essential cellular processes such as DNA replication and transcription. Acts by unhooking both sides of the ICLs, forming abasic (AP) sites on both strands. Unhooks ICLs derived from various cross-linking agents, including azinomycin B (AZB) and mechlorethamine, also known as nitrogen mustard (NM), protecting cells from the toxicity of these cross-linking agents. In vitro, also acts on monoadducts and can catalyze the excision of N7-methylguanine (7mGua) from an oligonucleotide containing N7-methyldeoxyguanosine (d7mG). Shows no unhooking activity toward FaPy-ICLs. The sequence is that of Interstrand DNA cross-link repair glycosylase (ycaQ) from Escherichia coli (strain K12).